The primary structure comprises 514 residues: Butyrophilin subfamily 2 member A2 (514 aa).

Residues methionine 1 to alanine 29 form the signal peptide. One can recognise an Ig-like V-type domain in the interval glutamine 30–methionine 142. Residues glutamine 30–serine 244 lie on the Extracellular side of the membrane. N-linked (GlcNAc...) asparagine glycosylation is found at asparagine 47 and asparagine 115. 2 disulfide bridges follow: cysteine 52–cysteine 126 and cysteine 166–cysteine 220. Positions proline 150–glutamate 232 constitute an Ig-like C2-type domain. A helical membrane pass occupies residues leucine 245–threonine 265. Residues serine 266–proline 514 are Cytoplasmic-facing. A coiled-coil region spans residues isoleucine 281–arginine 304. The 194-residue stretch at alanine 295 to alanine 488 folds into the B30.2/SPRY domain.

Belongs to the immunoglobulin superfamily. BTN/MOG family. N-glycosylated. Widely expressed (at protein level). In the thymus, restricted to the corticomedullary junction, but not confined solely to epithelial cells (at protein level). Significant expression on naive B-cells, splenic natural killer cells, dendritic cells and peritoneal macrophages (at protein level). Negligible expression on naive T-cells up-regulated on activated T-cells (at protein level).

Its subcellular location is the membrane. In terms of biological role, inhibits the proliferation of CD4 and CD8 T-cells activated by anti-CD3 antibodies, T-cell metabolism and IL2 and IFNG secretion. This chain is Butyrophilin subfamily 2 member A2 (Btn2a2), found in Mus musculus (Mouse).